The sequence spans 146 residues: Hemoglobin subunit beta (146 aa).

Val-1 is modified (N-acetylvaline). Positions 2 to 146 (HLTGEEKSAV…VATALAHKYH (145 aa)) constitute a Globin domain. Thr-12 carries the post-translational modification Phosphothreonine. Ser-44 carries the phosphoserine modification. His-63 lines the heme b pocket. Residue Lys-82 is modified to N6-acetyllysine. Residue His-92 participates in heme b binding. Cys-93 bears the S-nitrosocysteine mark. The residue at position 144 (Lys-144) is an N6-acetyllysine.

Belongs to the globin family. As to quaternary structure, heterotetramer of two alpha chains and two beta chains. As to expression, red blood cells.

In terms of biological role, involved in oxygen transport from the lung to the various peripheral tissues. This chain is Hemoglobin subunit beta (HBB), found in Tursiops truncatus (Atlantic bottle-nosed dolphin).